Consider the following 638-residue polypeptide: 3D-(3,5/4)-trihydroxycyclohexane-1,2-dione hydrolase (638 aa).

Glu-67 contributes to the thiamine diphosphate binding site. A thiamine pyrophosphate binding region spans residues 442–523 (SLPGDLQRLW…INIMLFDNSG (82 aa)). 2 residues coordinate Mg(2+): Asp-494 and Asn-521.

Belongs to the TPP enzyme family. Mg(2+) is required as a cofactor. It depends on thiamine diphosphate as a cofactor.

It catalyses the reaction 3D-3,5/4-trihydroxycyclohexane-1,2-dione + H2O = 5-deoxy-D-glucuronate + H(+). It participates in polyol metabolism; myo-inositol degradation into acetyl-CoA; acetyl-CoA from myo-inositol: step 3/7. Involved in the cleavage of the C1-C2 bond of 3D-(3,5/4)-trihydroxycyclohexane-1,2-dione (THcHDO) to yield 5-deoxy-glucuronate (5DG). This is 3D-(3,5/4)-trihydroxycyclohexane-1,2-dione hydrolase from Listeria monocytogenes serovar 1/2a (strain ATCC BAA-679 / EGD-e).